We begin with the raw amino-acid sequence, 548 residues long: Chaperonin GroEL (548 aa).

ATP is bound by residues 30-33 (TLGP), lysine 51, 87-91 (DGTTT), glycine 415, 479-481 (NAA), and aspartate 495.

It belongs to the chaperonin (HSP60) family. As to quaternary structure, forms a cylinder of 14 subunits composed of two heptameric rings stacked back-to-back. Interacts with the co-chaperonin GroES.

It is found in the cytoplasm. It catalyses the reaction ATP + H2O + a folded polypeptide = ADP + phosphate + an unfolded polypeptide.. Functionally, together with its co-chaperonin GroES, plays an essential role in assisting protein folding. The GroEL-GroES system forms a nano-cage that allows encapsulation of the non-native substrate proteins and provides a physical environment optimized to promote and accelerate protein folding. This Klebsiella pneumoniae subsp. pneumoniae (strain ATCC 700721 / MGH 78578) protein is Chaperonin GroEL.